Here is a 312-residue protein sequence, read N- to C-terminus: Porphobilinogen deaminase (312 aa).

The residue at position 235 (cysteine 235) is an S-(dipyrrolylmethanemethyl)cysteine.

Belongs to the HMBS family. As to quaternary structure, monomer. Dipyrromethane serves as cofactor.

The enzyme catalyses 4 porphobilinogen + H2O = hydroxymethylbilane + 4 NH4(+). Its pathway is porphyrin-containing compound metabolism; protoporphyrin-IX biosynthesis; coproporphyrinogen-III from 5-aminolevulinate: step 2/4. Functionally, tetrapolymerization of the monopyrrole PBG into the hydroxymethylbilane pre-uroporphyrinogen in several discrete steps. This chain is Porphobilinogen deaminase, found in Mycolicibacterium gilvum (strain PYR-GCK) (Mycobacterium gilvum (strain PYR-GCK)).